Reading from the N-terminus, the 426-residue chain is Inositol hexakisphosphate kinase 2 (426 aa).

ATP is bound by residues 207–209 (ENL) and D220. Substrate-binding positions include K222 and 236–243 (KAANQIRK). D383 is an ATP binding site. A substrate-binding site is contributed by H386.

The protein belongs to the inositol phosphokinase (IPK) family.

It is found in the nucleus. It carries out the reaction 1D-myo-inositol hexakisphosphate + ATP = 5-diphospho-1D-myo-inositol 1,2,3,4,6-pentakisphosphate + ADP. It functions in the pathway phospholipid metabolism; phosphatidylinositol metabolism. Inhibited by flavonoids, including myricetin, quercetin, luteolin, isorhamnetin, rhamnetin, kaempferol, diosmetin and apigenin. Its function is as follows. Converts inositol hexakisphosphate (InsP6) to diphosphoinositol pentakisphosphate (InsP7/PP-InsP5). This is Inositol hexakisphosphate kinase 2 from Homo sapiens (Human).